A 222-amino-acid polypeptide reads, in one-letter code: Probable transaldolase (222 aa).

Residue Lys91 is the Schiff-base intermediate with substrate of the active site.

This sequence belongs to the transaldolase family. Type 3B subfamily.

It localises to the cytoplasm. The enzyme catalyses D-sedoheptulose 7-phosphate + D-glyceraldehyde 3-phosphate = D-erythrose 4-phosphate + beta-D-fructose 6-phosphate. It functions in the pathway carbohydrate degradation; pentose phosphate pathway; D-glyceraldehyde 3-phosphate and beta-D-fructose 6-phosphate from D-ribose 5-phosphate and D-xylulose 5-phosphate (non-oxidative stage): step 2/3. In terms of biological role, transaldolase is important for the balance of metabolites in the pentose-phosphate pathway. The sequence is that of Probable transaldolase from Chlorobium phaeovibrioides (strain DSM 265 / 1930) (Prosthecochloris vibrioformis (strain DSM 265)).